A 626-amino-acid polypeptide reads, in one-letter code: ATP-dependent RNA helicase dbp-8 (626 aa).

Low complexity predominate over residues 1–25 (MPSATAAKAKKANANANLKSKVNKA). Positions 1 to 183 (MPSATAAKAK…ATPALPVPEP (183 aa)) are disordered. Positions 40-98 (DESDFGSELDVEDESAASDEEDEDEDEDEHDLEEGVSDEGEGVSDEEEGVSDEDEDEEN) are enriched in acidic residues. A compositionally biased stretch (basic and acidic residues) spans 161–173 (KQAEAPKTEKTEE). The Q motif signature appears at 195–223 (TTFDALNVRPWLVQSLANMAIKRPTGIQK). A Helicase ATP-binding domain is found at 226–406 (IPEILKGRDC…ERPPIPGRAP (181 aa)). Position 239 to 246 (239 to 246 (SRTGSGKT)) interacts with ATP. Positions 348–351 (DEAD) match the DEAD box motif. A Helicase C-terminal domain is found at 438–589 (YLHMFLLTPQ…GVNLETRVIR (152 aa)).

The protein belongs to the DEAD box helicase family. DDX49/DBP8 subfamily.

Its subcellular location is the nucleus. The protein localises to the nucleolus. The enzyme catalyses ATP + H2O = ADP + phosphate + H(+). Functionally, ATP-binding RNA helicase involved in 40S ribosomal subunit biogenesis and is required for the normal formation of 18S rRNAs through pre-rRNA processing at A0, A1 and A2 sites. Required for vegetative growth. The protein is ATP-dependent RNA helicase dbp-8 (dbp-8) of Neurospora crassa (strain ATCC 24698 / 74-OR23-1A / CBS 708.71 / DSM 1257 / FGSC 987).